The primary structure comprises 510 residues: Serine carboxypeptidase-like 48 (510 aa).

Positions 1-25 (MDSKTTFLTFLLCIFIFSHFSPSTS) are cleaved as a signal peptide. 3 disulfide bridges follow: Cys141–Cys383, Cys309–Cys326, and Cys349–Cys354. 2 N-linked (GlcNAc...) asparagine glycosylation sites follow: Asn158 and Asn159. The active site involves Ser231. Residues Asp421 and His478 contribute to the active site.

Belongs to the peptidase S10 family. As to expression, ubiquitous.

Its subcellular location is the secreted. Probable carboxypeptidase. The polypeptide is Serine carboxypeptidase-like 48 (SCPL48) (Arabidopsis thaliana (Mouse-ear cress)).